A 339-amino-acid chain; its full sequence is Protein-glutamate methylesterase/protein-glutamine glutaminase (339 aa).

Residues 2-119 form the Response regulatory domain; it reads RIGVVNDMPM…EGNASSQSAR (118 aa). Residue Asp53 is modified to 4-aspartylphosphate. The CheB-type methylesterase domain occupies 149–338; it reads PTPRRLIAIG…SRIIEACERS (190 aa). Residues Ser160, His187, and Asp280 contribute to the active site.

This sequence belongs to the CheB family. Post-translationally, phosphorylated by CheA. Phosphorylation of the N-terminal regulatory domain activates the methylesterase activity.

It is found in the cytoplasm. It carries out the reaction [protein]-L-glutamate 5-O-methyl ester + H2O = L-glutamyl-[protein] + methanol + H(+). It catalyses the reaction L-glutaminyl-[protein] + H2O = L-glutamyl-[protein] + NH4(+). Functionally, involved in chemotaxis. Part of a chemotaxis signal transduction system that modulates chemotaxis in response to various stimuli. Catalyzes the demethylation of specific methylglutamate residues introduced into the chemoreceptors (methyl-accepting chemotaxis proteins or MCP) by CheR. Also mediates the irreversible deamidation of specific glutamine residues to glutamic acid. The chain is Protein-glutamate methylesterase/protein-glutamine glutaminase from Mesorhizobium japonicum (strain LMG 29417 / CECT 9101 / MAFF 303099) (Mesorhizobium loti (strain MAFF 303099)).